Here is a 226-residue protein sequence, read N- to C-terminus: Aspartyl protease inhibitor (226 aa).

The N-terminal stretch at methionine 1 to alanine 15 is a signal peptide. 2 disordered regions span residues glycine 95–serine 116 and glutamate 196–valine 218. An intrachain disulfide couples cysteine 131 to cysteine 222.

The protein belongs to the protease inhibitor I33 family.

The protein resides in the secreted. Its function is as follows. Aspartyl protease inhibitor. This chain is Aspartyl protease inhibitor, found in Parelaphostrongylus tenuis (Meningeal worm).